The chain runs to 268 residues: Homeobox protein Hox-C4a (268 aa).

Residues 70–129 (PEPDTQRGHGLPHAGHLLGKGQSASCEPPPLPLSPATPSAASSACNQATPEHPNSSASAK) are disordered. 2 stretches are compositionally biased toward low complexity: residues 77–95 (GHGLPHAGHLLGKGQSASC) and 105–114 (ATPSAASSAC). The span at 115 to 128 (NQATPEHPNSSASA) shows a compositional bias: polar residues. An Antp-type hexapeptide motif is present at residues 133–138 (VYPWMK). A DNA-binding region (homeobox) is located at residues 154–213 (PKRSRTAYTRQQVLELEKEFHYNRYLTRRRRIEIAHSLVLSERQIKIWFQNRRMKWKKDH). The tract at residues 212-268 (DHRLPNTKVRSSSSTGISSGSNTSSAAGVVAAASTTNTMSASEDLSGTERGEDITRL) is disordered. Low complexity predominate over residues 222-253 (SSSSTGISSGSNTSSAAGVVAAASTTNTMSAS). Basic and acidic residues predominate over residues 258-268 (GTERGEDITRL).

The protein belongs to the Antp homeobox family. Deformed subfamily.

The protein localises to the nucleus. In terms of biological role, sequence-specific transcription factor which is part of a developmental regulatory system that provides cells with specific positional identities on the anterior-posterior axis. The sequence is that of Homeobox protein Hox-C4a (hoxc4a) from Danio rerio (Zebrafish).